Reading from the N-terminus, the 485-residue chain is tRNA-2-methylthio-N(6)-dimethylallyladenosine synthase (485 aa).

The 118-residue stretch at 37-154 folds into the MTTase N-terminal domain; it reads GKLYIKTHGC…LPELIRARRE (118 aa). Residues cysteine 46, cysteine 83, cysteine 117, cysteine 191, cysteine 195, and cysteine 198 each contribute to the [4Fe-4S] cluster site. The Radical SAM core domain maps to 177–416; sequence RADGPSAFVS…HINAHAAGIS (240 aa). Residues 417-480 form the TRAM domain; sequence QRMVGSVQRV…SNSLRGRIQL (64 aa).

This sequence belongs to the methylthiotransferase family. MiaB subfamily. As to quaternary structure, monomer. [4Fe-4S] cluster serves as cofactor.

Its subcellular location is the cytoplasm. It carries out the reaction N(6)-dimethylallyladenosine(37) in tRNA + (sulfur carrier)-SH + AH2 + 2 S-adenosyl-L-methionine = 2-methylsulfanyl-N(6)-dimethylallyladenosine(37) in tRNA + (sulfur carrier)-H + 5'-deoxyadenosine + L-methionine + A + S-adenosyl-L-homocysteine + 2 H(+). Functionally, catalyzes the methylthiolation of N6-(dimethylallyl)adenosine (i(6)A), leading to the formation of 2-methylthio-N6-(dimethylallyl)adenosine (ms(2)i(6)A) at position 37 in tRNAs that read codons beginning with uridine. In Xanthomonas campestris pv. campestris (strain 8004), this protein is tRNA-2-methylthio-N(6)-dimethylallyladenosine synthase.